A 216-amino-acid chain; its full sequence is Somatotropin (216 aa).

Positions M1–A25 are cleaved as a signal peptide. A Zn(2+)-binding site is contributed by H46. C78 and C189 are joined by a disulfide. E198 provides a ligand contact to Zn(2+). The cysteines at positions 206 and 214 are disulfide-linked.

The protein belongs to the somatotropin/prolactin family.

It localises to the secreted. Growth hormone plays an important role in growth control. This Anas platyrhynchos (Mallard) protein is Somatotropin (GH).